A 306-amino-acid chain; its full sequence is MNDLLKGSLEFSRDRSNRSDIESGHGPGNSGDLGLSGFFKKVQEIEKQYEKLDKHLNKLQGAHEETKAVTKAPAMKSIKQRMERDVDEVGRISRFIKGKIEELDRENLENRTKPGCGKGTGVDRTRTATTIAVKKKFKDKISEFQTLRQNIQQEYREVVERRVFTVTGQRADEEAIDRLIETGDSEQIFQKAIREQGRGQIMDTLAEIQERHDAVRDLEKKLLDLQQVFLDMAVLVDAQGEMLDNIENMVSSAVDHVQSGNNQLTKAVKSQKSSRKWMCIAILILLIIIIITVISVLKPWTQKNGA.

An N-acetylmethionine modification is found at Met-1. Topologically, residues 1–276 (MNDLLKGSLE…AVKSQKSSRK (276 aa)) are cytoplasmic. A compositionally biased stretch (basic and acidic residues) spans 11–23 (FSRDRSNRSDIES). The segment at 11-35 (FSRDRSNRSDIESGHGPGNSGDLGL) is disordered. Coiled-coil stretches lie at residues 35–72 (LSGF…VTKA) and 134–162 (KKKF…VERR). The t-SNARE coiled-coil homology domain occupies 205 to 267 (LAEIQERHDA…QSGNNQLTKA (63 aa)). The chain crosses the membrane as a helical; Anchor for type IV membrane protein span at residues 277-297 (WMCIAILILLIIIIITVISVL). The Vesicular segment spans residues 298 to 306 (KPWTQKNGA).

This sequence belongs to the syntaxin family. Part of the t-SNARE complex.

It is found in the membrane. In terms of biological role, vesicle trafficking protein that functions in the secretory pathway. This Arabidopsis thaliana (Mouse-ear cress) protein is Putative syntaxin-131 (SYP131).